The primary structure comprises 224 residues: MKVKTKSKKVNKAWLNDHINDPYVKLAQKEGYRARAAYKLKEIDEALGLIKPGQVVVDLGAAPGAWSQYLRRRFAPKEAGTGGAAAGALNGRIIALDLLDFEPIEGVQFIQGDFHDEAVLAELSAAIGGRGVDVVVSDMAPNLSGIASSDSARIALLVELAVEFAETHLHPHGALVCKVFHGSGHSQLVELFKKRFRVVKPIKPKASRDKSSETFLVGIGLKSR.

5 residues coordinate S-adenosyl-L-methionine: glycine 64, tryptophan 66, aspartate 97, aspartate 113, and aspartate 138. Lysine 178 (proton acceptor) is an active-site residue.

It belongs to the class I-like SAM-binding methyltransferase superfamily. RNA methyltransferase RlmE family.

Its subcellular location is the cytoplasm. It catalyses the reaction uridine(2552) in 23S rRNA + S-adenosyl-L-methionine = 2'-O-methyluridine(2552) in 23S rRNA + S-adenosyl-L-homocysteine + H(+). In terms of biological role, specifically methylates the uridine in position 2552 of 23S rRNA at the 2'-O position of the ribose in the fully assembled 50S ribosomal subunit. The sequence is that of Ribosomal RNA large subunit methyltransferase E from Methylibium petroleiphilum (strain ATCC BAA-1232 / LMG 22953 / PM1).